Here is a 295-residue protein sequence, read N- to C-terminus: 4-hydroxy-tetrahydrodipicolinate synthase (295 aa).

Position 47 (threonine 47) interacts with pyruvate. Tyrosine 135 (proton donor/acceptor) is an active-site residue. Lysine 163 serves as the catalytic Schiff-base intermediate with substrate. Isoleucine 204 serves as a coordination point for pyruvate.

This sequence belongs to the DapA family. In terms of assembly, homotetramer; dimer of dimers.

It is found in the cytoplasm. The catalysed reaction is L-aspartate 4-semialdehyde + pyruvate = (2S,4S)-4-hydroxy-2,3,4,5-tetrahydrodipicolinate + H2O + H(+). The protein operates within amino-acid biosynthesis; L-lysine biosynthesis via DAP pathway; (S)-tetrahydrodipicolinate from L-aspartate: step 3/4. Catalyzes the condensation of (S)-aspartate-beta-semialdehyde [(S)-ASA] and pyruvate to 4-hydroxy-tetrahydrodipicolinate (HTPA). The polypeptide is 4-hydroxy-tetrahydrodipicolinate synthase (Caldicellulosiruptor saccharolyticus (strain ATCC 43494 / DSM 8903 / Tp8T 6331)).